Here is a 303-residue protein sequence, read N- to C-terminus: 5-dehydro-4-deoxyglucarate dehydratase (303 aa).

This sequence belongs to the DapA family.

The catalysed reaction is 5-dehydro-4-deoxy-D-glucarate + H(+) = 2,5-dioxopentanoate + CO2 + H2O. It functions in the pathway carbohydrate acid metabolism; D-glucarate degradation; 2,5-dioxopentanoate from D-glucarate: step 2/2. In Pseudomonas putida (Arthrobacter siderocapsulatus), this protein is 5-dehydro-4-deoxyglucarate dehydratase.